An 89-amino-acid polypeptide reads, in one-letter code: Large ribosomal subunit protein bL27 (89 aa).

A disordered region spans residues 1 to 21 (MAHKKAGGSSRNGRDSQSKRL).

It belongs to the bacterial ribosomal protein bL27 family.

The protein is Large ribosomal subunit protein bL27 of Rhizobium rhizogenes (strain K84 / ATCC BAA-868) (Agrobacterium radiobacter).